We begin with the raw amino-acid sequence, 343 residues long: Heat-inducible transcription repressor HrcA (343 aa).

Belongs to the HrcA family.

Negative regulator of class I heat shock genes (grpE-dnaK-dnaJ and groELS operons). Prevents heat-shock induction of these operons. The polypeptide is Heat-inducible transcription repressor HrcA (Halalkalibacterium halodurans (strain ATCC BAA-125 / DSM 18197 / FERM 7344 / JCM 9153 / C-125) (Bacillus halodurans)).